The chain runs to 86 residues: Toxin Tpa5 (86 aa).

The N-terminal stretch at 1–20 (MSIFPIALALLLIGLEEGEA) is a signal peptide. Residues 22-85 (RDGYPISKNN…WGDPGTPPCM (64 aa)) form the LCN-type CS-alpha/beta domain. Disulfide bonds link C33–C84, C37–C58, C43–C64, and C47–C66.

Belongs to the long (4 C-C) scorpion toxin superfamily. Sodium channel inhibitor family. Beta subfamily. As to expression, expressed by the venom gland.

The protein localises to the secreted. In terms of biological role, beta toxins bind voltage-independently at site-4 of sodium channels (Nav) and shift the voltage of activation toward more negative potentials thereby affecting sodium channel activation and promoting spontaneous and repetitive firing. In Tityus pachyurus (Colombian scorpion), this protein is Toxin Tpa5.